The primary structure comprises 517 residues: GMP synthase [glutamine-hydrolyzing] (517 aa).

Positions 11–202 (KIIVLDFGSQ…AFNVCDAKAN (192 aa)) constitute a Glutamine amidotransferase type-1 domain. Cys-88 functions as the Nucleophile in the catalytic mechanism. Residues His-176 and Glu-178 contribute to the active site. The GMPS ATP-PPase domain occupies 203–392 (WTMDDFIEMQ…LGIPHDLVWR (190 aa)). 230–236 (SGGVDSS) provides a ligand contact to ATP.

Homodimer.

The catalysed reaction is XMP + L-glutamine + ATP + H2O = GMP + L-glutamate + AMP + diphosphate + 2 H(+). Its pathway is purine metabolism; GMP biosynthesis; GMP from XMP (L-Gln route): step 1/1. Its function is as follows. Catalyzes the synthesis of GMP from XMP. This Lactobacillus gasseri (strain ATCC 33323 / DSM 20243 / BCRC 14619 / CIP 102991 / JCM 1131 / KCTC 3163 / NCIMB 11718 / NCTC 13722 / AM63) protein is GMP synthase [glutamine-hydrolyzing].